The following is a 149-amino-acid chain: Secreted RxLR effector protein 47 (149 aa).

The N-terminal stretch at 1-22 (MICLLPLIAVMLFVFATHTVLA) is a signal peptide. A RxLR-dEER motif is present at residues 57 to 79 (RFLRQETTFEEKPSVNDVHAEER).

The protein belongs to the RxLR effector family.

It localises to the secreted. The protein resides in the host membrane. Secreted effector that completely suppresses the host cell death induced by cell death-inducing proteins. The protein is Secreted RxLR effector protein 47 of Plasmopara viticola (Downy mildew of grapevine).